The primary structure comprises 158 residues: NAD(P)H-quinone oxidoreductase subunit J, chloroplastic (158 aa).

It belongs to the complex I 30 kDa subunit family. NDH is composed of at least 16 different subunits, 5 of which are encoded in the nucleus.

It localises to the plastid. It is found in the chloroplast thylakoid membrane. It carries out the reaction a plastoquinone + NADH + (n+1) H(+)(in) = a plastoquinol + NAD(+) + n H(+)(out). It catalyses the reaction a plastoquinone + NADPH + (n+1) H(+)(in) = a plastoquinol + NADP(+) + n H(+)(out). NDH shuttles electrons from NAD(P)H:plastoquinone, via FMN and iron-sulfur (Fe-S) centers, to quinones in the photosynthetic chain and possibly in a chloroplast respiratory chain. The immediate electron acceptor for the enzyme in this species is believed to be plastoquinone. Couples the redox reaction to proton translocation, and thus conserves the redox energy in a proton gradient. In Aethionema cordifolium (Lebanon stonecress), this protein is NAD(P)H-quinone oxidoreductase subunit J, chloroplastic.